Here is a 247-residue protein sequence, read N- to C-terminus: Probable transcriptional regulatory protein DvMF_3201 (247 aa).

Positions 1-21 (MAGHSKWANIQHRKGRQDAKR) are disordered.

It belongs to the TACO1 family.

It is found in the cytoplasm. This is Probable transcriptional regulatory protein DvMF_3201 from Nitratidesulfovibrio vulgaris (strain DSM 19637 / Miyazaki F) (Desulfovibrio vulgaris).